A 307-amino-acid polypeptide reads, in one-letter code: Elongation factor Ts (307 aa).

The involved in Mg(2+) ion dislocation from EF-Tu stretch occupies residues 80–83 (TDFV).

This sequence belongs to the EF-Ts family.

Its subcellular location is the cytoplasm. Functionally, associates with the EF-Tu.GDP complex and induces the exchange of GDP to GTP. It remains bound to the aminoacyl-tRNA.EF-Tu.GTP complex up to the GTP hydrolysis stage on the ribosome. The polypeptide is Elongation factor Ts (Rhizorhabdus wittichii (strain DSM 6014 / CCUG 31198 / JCM 15750 / NBRC 105917 / EY 4224 / RW1) (Sphingomonas wittichii)).